The following is a 612-amino-acid chain: 1,8-cineole synthase, chloroplastic (612 aa).

The N-terminal 52 residues, 1 to 52 (MALVSVAPLASRSCLSKSLISSTHELKPLRRTILPTLRWKSATPSINMCLTT), are a transit peptide targeting the chloroplast. Mg(2+) is bound by residues D363, D367, and D515. The short motif at 363–367 (DDIYD) is the DDXXD motif element.

This sequence belongs to the terpene synthase family. Tpsd subfamily. It depends on Mg(2+) as a cofactor. The cofactor is Mn(2+).

The protein localises to the plastid. Its subcellular location is the chloroplast. It catalyses the reaction (2E)-geranyl diphosphate + H2O = 1,8-cineole + diphosphate. The protein operates within terpene metabolism; oleoresin biosynthesis. Its function is as follows. Terpene synthase (TPS) involved in the biosynthesis of monoterpene natural products included in conifer oleoresin secretions and volatile emissions; these compounds contribute to biotic and abiotic stress defense against herbivores and pathogens. Catalyzes the conversion of (2E)-geranyl diphosphate (GPP) to 1,8-cineole. This chain is 1,8-cineole synthase, chloroplastic, found in Picea sitchensis (Sitka spruce).